A 375-amino-acid polypeptide reads, in one-letter code: 23S rRNA (uracil(747)-C(5))-methyltransferase RlmC (375 aa).

[4Fe-4S] cluster-binding residues include Cys3, Cys11, Cys14, and Cys87. Residues Gln212, Phe241, Glu262, and Asn307 each coordinate S-adenosyl-L-methionine. Cys334 acts as the Nucleophile in catalysis.

Belongs to the class I-like SAM-binding methyltransferase superfamily. RNA M5U methyltransferase family. RlmC subfamily.

The catalysed reaction is uridine(747) in 23S rRNA + S-adenosyl-L-methionine = 5-methyluridine(747) in 23S rRNA + S-adenosyl-L-homocysteine + H(+). In terms of biological role, catalyzes the formation of 5-methyl-uridine at position 747 (m5U747) in 23S rRNA. The polypeptide is 23S rRNA (uracil(747)-C(5))-methyltransferase RlmC (Serratia proteamaculans (strain 568)).